The primary structure comprises 320 residues: Cytochrome f (320 aa).

A signal peptide spans 1–35 (MQTRNTFSWIREEITRSISVSLIIYIITRASISSA). Heme-binding residues include tyrosine 36, cysteine 56, cysteine 59, and histidine 60. A helical membrane pass occupies residues 286-306 (VQGLLFFLASVVLAQIFLVLK).

Belongs to the cytochrome f family. As to quaternary structure, the 4 large subunits of the cytochrome b6-f complex are cytochrome b6, subunit IV (17 kDa polypeptide, petD), cytochrome f and the Rieske protein, while the 4 small subunits are PetG, PetL, PetM and PetN. The complex functions as a dimer. It depends on heme as a cofactor.

It localises to the plastid. Its subcellular location is the chloroplast thylakoid membrane. Component of the cytochrome b6-f complex, which mediates electron transfer between photosystem II (PSII) and photosystem I (PSI), cyclic electron flow around PSI, and state transitions. In Draba nemorosa (Woodland whitlowgrass), this protein is Cytochrome f.